A 291-amino-acid polypeptide reads, in one-letter code: MAVPVVQAVQAVHLESDAFLVCLNHALSTEKEEVMGLCIGELNDDVRSESKFAHAGSDVCTVPEKVDSIRVVHIHSVIILRRSDKRKDRVEISPEQLSAASTEAERLAELTGRPMRVVGWYHSHPHITVWPSHVDVRTQAMYQMMDQGFVGLIFSCFIEDKNTKTGRVLYTCFQSVQAQKSSDYERIEIPVHVVPHVTIGKVCLESAVELPKILCQEEQDAYRRIHSLTHLDSVTKIHNGSVFTKNLCSQMSAVSGPLLQWLEDRLEQNQQHLRELQREKEELMAELRSLE.

Ala-2 is subject to N-acetylalanine. The MPN domain maps to 12–179 (VHLESDAFLV…YTCFQSVQAQ (168 aa)). Zn(2+) contacts are provided by His-122, His-124, and Asp-135. The short motif at 122-135 (HSHPHITVWPSHVD) is the JAMM motif element. Ser-233 carries the phosphoserine modification.

This sequence belongs to the peptidase M67A family. BRCC36 subfamily. As to quaternary structure, component of the ARISC complex, at least composed of UIMC1/RAP80, ABRAXAS1, BRCC3/BRCC36, BABAM2 and BABAM1/NBA1. Component of the BRCA1-A complex, at least composed of BRCA1, BARD1, UIMC1/RAP80, ABRAXAS1, BRCC3/BRCC36, BABAM2 and BABAM1/NBA1. In the BRCA1-A complex, interacts directly with ABRAXAS1 and BABAM2. Component of the BRISC complex, at least composed of ABRAXAS2, BRCC3/BRCC36, BABAM2 and BABAM1/NBA1. Identified in a complex with SHMT2 and the other subunits of the BRISC complex. In the BRISC complex, interacts directly with ABRAXAS2. Identified in a complex with ABRAXAS2 and NUMA1. The BRISC complex interacts with the CSN complex. Component of the BRCA1/BRCA2 containing complex (BRCC), which also contains BRCA1, BRCA2, BARD1, BABAM2 and RAD51. BRCC is a ubiquitin E3 ligase complex that enhances cellular survival following DNA damage. Interacts with BRCA1. Binds polyubiquitin. Interacts with PWWP2B. Interacts with HDAC1; this interaction is enhanced in the presence of PWWP2B. Zn(2+) serves as cofactor.

It localises to the nucleus. Its subcellular location is the cytoplasm. It is found in the cytoskeleton. The protein localises to the spindle pole. Functionally, metalloprotease that specifically cleaves 'Lys-63'-linked polyubiquitin chains. Does not have activity toward 'Lys-48'-linked polyubiquitin chains. Component of the BRCA1-A complex, a complex that specifically recognizes 'Lys-63'-linked ubiquitinated histones H2A and H2AX at DNA lesions sites, leading to target the BRCA1-BARD1 heterodimer to sites of DNA damage at double-strand breaks (DSBs). In the BRCA1-A complex, it specifically removes 'Lys-63'-linked ubiquitin on histones H2A and H2AX, antagonizing the RNF8-dependent ubiquitination at double-strand breaks (DSBs). Catalytic subunit of the BRISC complex, a multiprotein complex that specifically cleaves 'Lys-63'-linked ubiquitin in various substrates. Mediates the specific 'Lys-63'-specific deubiquitination associated with the COP9 signalosome complex (CSN), via the interaction of the BRISC complex with the CSN complex. The BRISC complex is required for normal mitotic spindle assembly and microtubule attachment to kinetochores via its role in deubiquitinating NUMA1. Plays a role in interferon signaling via its role in the deubiquitination of the interferon receptor IFNAR1; deubiquitination increases IFNAR1 activity by enhancing its stability and cell surface expression. Acts as a regulator of the NLRP3 inflammasome by mediating deubiquitination of NLRP3, leading to NLRP3 inflammasome assembly. Down-regulates the response to bacterial lipopolysaccharide (LPS) via its role in IFNAR1 deubiquitination. Deubiquitinates HDAC1 and PWWP2B leading to their stabilization. The chain is Lys-63-specific deubiquitinase BRCC36 (Brcc3) from Rattus norvegicus (Rat).